The chain runs to 295 residues: Hydroxyquinol 1,2-dioxygenase (295 aa).

Fe cation-binding residues include Tyr165, Tyr200, His224, and His226.

The protein belongs to the intradiol ring-cleavage dioxygenase family. Fe(3+) serves as cofactor.

The catalysed reaction is benzene-1,2,4-triol + O2 = maleylacetate + 2 H(+). Its pathway is aromatic compound metabolism. In terms of biological role, involved in the gamma-resorcylate (2,6-dihydroxybenzoate) catabolism. Catalyzes the conversion of hydroxyquinol to malelylacetate. The chain is Hydroxyquinol 1,2-dioxygenase from Rhizobium sp. (strain MTP-10005).